The following is a 196-amino-acid chain: Urease accessory protein UreE (196 aa).

The disordered stretch occupies residues 150–196; it reads RGAYSGGHDHGHAHAHSHAEAHSHAHGESHSHSHSHSHDDHHHHDHD. Residues 156–196 show a composition bias toward basic and acidic residues; that stretch reads GHDHGHAHAHSHAEAHSHAHGESHSHSHSHSHDDHHHHDHD.

This sequence belongs to the UreE family.

It is found in the cytoplasm. Involved in urease metallocenter assembly. Binds nickel. Probably functions as a nickel donor during metallocenter assembly. The protein is Urease accessory protein UreE of Mesorhizobium japonicum (strain LMG 29417 / CECT 9101 / MAFF 303099) (Mesorhizobium loti (strain MAFF 303099)).